A 61-amino-acid polypeptide reads, in one-letter code: MGLSGISPLSLLLILAIIVALFGTSKLKTIGSDLGEAIKNFRKAMNSEETNDTQKDDHKPS.

The helical transmembrane segment at Gly-2–Phe-22 threads the bilayer.

It belongs to the TatA/E family. As to quaternary structure, the Tat system comprises two distinct complexes: a TatABC complex, containing multiple copies of TatA, TatB and TatC subunits, and a separate TatA complex, containing only TatA subunits. Substrates initially bind to the TatABC complex, which probably triggers association of the separate TatA complex to form the active translocon.

The protein localises to the cell inner membrane. Part of the twin-arginine translocation (Tat) system that transports large folded proteins containing a characteristic twin-arginine motif in their signal peptide across membranes. TatA could form the protein-conducting channel of the Tat system. The polypeptide is Sec-independent protein translocase protein TatA (Legionella pneumophila (strain Paris)).